We begin with the raw amino-acid sequence, 360 residues long: Beta-1,3-N-acetylglucosaminyltransferase manic fringe (360 aa).

Residues 1-5 (MILRR) are Cytoplasmic-facing. Residues 6–26 (LFHVLPAFAFTLFILVLLDLQ) traverse the membrane as a helical; Signal-anchor for type II membrane protein segment. Over 27–360 (LRTRSDQKPQ…ALSWNQHVMH (334 aa)) the chain is Lumenal. Residues 51-74 (TTAENQHRDGAHEKEKAEGQKWTE) are disordered. The segment covering 55–74 (NQHRDGAHEKEKAEGQKWTE) has biased composition (basic and acidic residues). Arg100 is a binding site for substrate. 2 disulfides stabilise this stretch: Cys139/Cys150 and Cys168/Cys231. Residue Asp172 participates in substrate binding. Asp173 serves as a coordination point for Mn(2+). Asn214 carries N-linked (GlcNAc...) asparagine glycosylation. The active site involves Asp261. Mn(2+) is bound at residue His285. Cys335 and Cys344 form a disulfide bridge.

It belongs to the glycosyltransferase 31 family. Requires Mn(2+) as cofactor.

Its subcellular location is the golgi apparatus membrane. The enzyme catalyses 3-O-(alpha-L-fucosyl)-L-threonyl-[EGF-like domain protein] + UDP-N-acetyl-alpha-D-glucosamine = 3-O-(N-acetyl-beta-D-glucosaminyl-(1-&gt;3)-alpha-L-fucosyl)-L-threonyl-[EGF-like domain protein] + UDP + H(+). It catalyses the reaction 3-O-(alpha-L-fucosyl)-L-seryl-[EGF-like domain protein] + UDP-N-acetyl-alpha-D-glucosamine = 3-O-(N-acetyl-beta-D-glucosaminyl-(1-&gt;3)-alpha-L-fucosyl)-L-seryl-[EGF-like domain protein] + UDP + H(+). Glycosyltransferase that initiates the elongation of O-linked fucose residues attached to EGF-like repeats in the extracellular domain of Notch molecules. The sequence is that of Beta-1,3-N-acetylglucosaminyltransferase manic fringe from Danio rerio (Zebrafish).